Consider the following 115-residue polypeptide: Envelope glycoprotein N (115 aa).

The signal sequence occupies residues M1–S27. Over A28–S77 the chain is Virion surface. The helical transmembrane segment at M78–L98 threads the bilayer. At Y99 to W115 the chain is on the intravirion side.

This sequence belongs to the herpesviridae glycoprotein N family. As to quaternary structure, interacts (via N-terminus) with gM (via N-terminus). The gM-gN heterodimer forms the gCII complex.

The protein resides in the virion membrane. It localises to the host membrane. Its subcellular location is the host Golgi apparatus. The protein localises to the host trans-Golgi network. Envelope glycoprotein necessary for proper maturation of gM and modulation of its membrane fusion activity. Also plays a critical role in virion morphogenesis. This chain is Envelope glycoprotein N, found in Psittacid herpesvirus 1 (isolate Amazon parrot/-/97-0001/1997) (PsHV-1).